The sequence spans 206 residues: N-(5'-phosphoribosyl)anthranilate isomerase (206 aa).

The protein belongs to the TrpF family.

The enzyme catalyses N-(5-phospho-beta-D-ribosyl)anthranilate = 1-(2-carboxyphenylamino)-1-deoxy-D-ribulose 5-phosphate. Its pathway is amino-acid biosynthesis; L-tryptophan biosynthesis; L-tryptophan from chorismate: step 3/5. This chain is N-(5'-phosphoribosyl)anthranilate isomerase, found in Pseudomonas putida (strain ATCC 700007 / DSM 6899 / JCM 31910 / BCRC 17059 / LMG 24140 / F1).